Reading from the N-terminus, the 156-residue chain is SsrA-binding protein (156 aa).

This sequence belongs to the SmpB family.

It is found in the cytoplasm. Required for rescue of stalled ribosomes mediated by trans-translation. Binds to transfer-messenger RNA (tmRNA), required for stable association of tmRNA with ribosomes. tmRNA and SmpB together mimic tRNA shape, replacing the anticodon stem-loop with SmpB. tmRNA is encoded by the ssrA gene; the 2 termini fold to resemble tRNA(Ala) and it encodes a 'tag peptide', a short internal open reading frame. During trans-translation Ala-aminoacylated tmRNA acts like a tRNA, entering the A-site of stalled ribosomes, displacing the stalled mRNA. The ribosome then switches to translate the ORF on the tmRNA; the nascent peptide is terminated with the 'tag peptide' encoded by the tmRNA and targeted for degradation. The ribosome is freed to recommence translation, which seems to be the essential function of trans-translation. In Clostridium botulinum (strain Alaska E43 / Type E3), this protein is SsrA-binding protein.